A 2009-amino-acid polypeptide reads, in one-letter code: MEQTVLVPPGPDSFNFFTRESLAAIERRIAEEKAKNPKPDKKDDDENGPKPNSDLEAGKNLPFIYGDIPPEMVSEPLEDLDPYYINKKTFIVLNKGKAIFRFSATSALYILTPFNPLRKIAIKILVHSLFSMLIMCTILTNCVFMTMSNPPDWTKNVEYTFTGIYTFESLIKIIARGFCLEDFTFLRDPWNWLDFTVITFAYVTEFVDLGNVSALRTFRVLRALKTISVIPGLKTIVGALIQSVKKLSDVMILTVFCLSVFALIGLQLFMGNLRNKCIQWPPTNASLEEHSIEKNITVNYNGTLINETVFEFDWKSYIQDSRYHYFLEGFLDALLCGNSSDAGQCPEGYMCVKAGRNPNYGYTSFDTFSWAFLSLFRLMTQDFWENLYQLTLRAAGKTYMIFFVLVIFLGSFYLINLILAVVAMAYEEQNQATLEEAEQKEAEFQQMIEQLKKQQEAAQQAATATASEHSREPSAAGRLSDSSSEASKLSSKSAKERRNRRKKRKQKEQSGGEEKDEDEFQKSESEDSIRRKGFRFSIEGNRLTYEKRYSSPHQSLLSIRGSLFSPRRNSRTSLFSFRGRAKDVGSENDFADDEHSTFEDNESRRDSLFVPRRHGERRNSNLSQTSRSSRMLAVFPANGKMHSTVDCNGVVSLVGGPSVPTSPVGQLLPEVIIDKPATDDNGTTTETEMRKRRSSSFHVSMDFLEDPSQRQRAMSIASILTNTVEELEESRQKCPPCWYKFSNIFLIWDCSPYWLKVKHVVNLVVMDPFVDLAITICIVLNTLFMAMEHYPMTDHFNNVLTVGNLVFTGIFTAEMFLKIIAMDPYYYFQEGWNIFDGFIVTLSLVELGLANVEGLSVLRSFRLLRVFKLAKSWPTLNMLIKIIGNSVGALGNLTLVLAIIVFIFAVVGMQLFGKSYKDCVCKIASDCQLPRWHMNDFFHSFLIVFRVLCGEWIETMWDCMEVAGQAMCLTVFMMVMVIGNLVVLNLFLALLLSSFSADNLAATDDDNEMNNLQIAVDRMHKGVAYVKRKIYEFIQQSFIRKQKILDEIKPLDDLNNKKDSCMSNHTAEIGKDLDYLKDVNGTTSGIGTGSSVEKYIIDESDYMSFINNPSLTVTVPIAVGESDFENLNTEDFSSESDLEESKEKLNESSSSSEGSTVDIGAPVEEQPVVEPEETLEPEACFTEGCVQRFKCCQINVEEGRGKQWWNLRRTCFRIVEHNWFETFIVFMILLSSGALAFEDIYIDQRKTIKTMLEYADKVFTYIFILEMLLKWVAYGYQTYFTNAWCWLDFLIVDVSLVSLTANALGYSELGAIKSLRTLRALRPLRALSRFEGMRVVVNALLGAIPSIMNVLLVCLIFWLIFSIMGVNLFAGKFYHCINTTTGDRFDIEDVNNHTDCLKLIERNETARWKNVKVNFDNVGFGYLSLLQVATFKGWMDIMYAAVDSRNVELQPKYEESLYMYLYFVIFIIFGSFFTLNLFIGVIIDNFNQQKKKFGGQDIFMTEEQKKYYNAMKKLGSKKPQKPIPRPGNKFQGMVFDFVTRQVFDISIMILICLNMVTMMVETDDQSEYVTTILSRINLVFIVLFTGECVLKLISLRHYYFTIGWNIFDFVVVILSIVGMFLAELIEKYFVSPTLFRVIRLARIGRILRLIKGAKGIRTLLFALMMSLPALFNIGLLLFLVMFIYAIFGMSNFAYVKREVGIDDMFNFETFGNSMICLFQITTSAGWDGLLAPILNSKPPDCDPNKVNPGSSVKGDCGNPSVGIFFFVSYIIISFLVVVNMYIAVILENFSVATEESAEPLSEDDFEMFYEVWEKFDPDATQFMEFEKLSQFAAALEPPLNLPQPNKLQLIAMDLPMVSGDRIHCLDILFAFTKRVLGESGEMDALRIQMEERFMASNPSKVSYQPITTTLKRKQEEVSAVIIQRAYRRHLLKRTVKQASFTYNKNKIKGGANLLIKEDMIIDRINENSITEKTDLTMSTAACPPSYDRVTKPIVEKHEQEGKDEKAKGK.

At 1-128 (MEQTVLVPPG…KIAIKILVHS (128 aa)) the chain is on the cytoplasmic side. The segment covering 28-48 (RIAEEKAKNPKPDKKDDDENG) has biased composition (basic and acidic residues). The interval 28–60 (RIAEEKAKNPKPDKKDDDENGPKPNSDLEAGKN) is disordered. The I repeat unit spans residues 110-454 (ILTPFNPLRK…QQMIEQLKKQ (345 aa)). A helical transmembrane segment spans residues 129–146 (LFSMLIMCTILTNCVFMT). Residues 147–152 (MSNPPD) are Extracellular-facing. The chain crosses the membrane as a helical span at residues 153–177 (WTKNVEYTFTGIYTFESLIKIIARG). The Cytoplasmic portion of the chain corresponds to 178–188 (FCLEDFTFLRD). The helical transmembrane segment at 189–205 (PWNWLDFTVITFAYVTE) threads the bilayer. The Extracellular portion of the chain corresponds to 206-213 (FVDLGNVS). A glycan (N-linked (GlcNAc...) asparagine) is linked at Asn211. The helical transmembrane segment at 214–235 (ALRTFRVLRALKTISVIPGLKT) threads the bilayer. The Cytoplasmic portion of the chain corresponds to 236–245 (IVGALIQSVK). The chain crosses the membrane as a helical span at residues 246 to 269 (KLSDVMILTVFCLSVFALIGLQLF). The Extracellular segment spans residues 270 to 369 (MGNLRNKCIQ…YGYTSFDTFS (100 aa)). Cystine bridges form between Cys277/Cys345 and Cys336/Cys351. Residues Asn284, Asn295, Asn301, Asn306, and Asn338 are each glycosylated (N-linked (GlcNAc...) asparagine). The pore-forming intramembrane region spans 370 to 384 (WAFLSLFRLMTQDFW). Over 385–397 (ENLYQLTLRAAGK) the chain is Extracellular. The chain crosses the membrane as a helical span at residues 398 to 423 (TYMIFFVLVIFLGSFYLINLILAVVA). At 424-768 (MAYEEQNQAT…HVVNLVVMDP (345 aa)) the chain is on the cytoplasmic side. The disordered stretch occupies residues 455 to 529 (QEAAQQAATA…FQKSESEDSI (75 aa)). The span at 456 to 466 (EAAQQAATATA) shows a compositional bias: low complexity. Ser470 is modified (phosphoserine). Residues 479-492 (LSDSSSEASKLSSK) are compositionally biased toward low complexity. Residues 495 to 506 (KERRNRRKKRKQ) are compositionally biased toward basic residues. Basic and acidic residues predominate over residues 520-529 (FQKSESEDSI). 6 positions are modified to phosphoserine: Ser523, Ser525, Ser550, Ser551, Ser607, and Ser730. Residues 584 to 627 (VGSENDFADDEHSTFEDNESRRDSLFVPRRHGERRNSNLSQTSR) form a disordered region. Over residues 593–607 (DEHSTFEDNESRRDS) the composition is skewed to basic and acidic residues. An II repeat occupies 750-1022 (CSPYWLKVKH…QIAVDRMHKG (273 aa)). A helical membrane pass occupies residues 769–787 (FVDLAITICIVLNTLFMAM). The Extracellular segment spans residues 788–797 (EHYPMTDHFN). Residues 798 to 820 (NVLTVGNLVFTGIFTAEMFLKII) traverse the membrane as a helical segment. Topologically, residues 821–830 (AMDPYYYFQE) are cytoplasmic. Residues 831–849 (GWNIFDGFIVTLSLVELGL) traverse the membrane as a helical segment. The Extracellular portion of the chain corresponds to 850-854 (ANVEG). Residues 855-874 (LSVLRSFRLLRVFKLAKSWP) traverse the membrane as a helical segment. The Cytoplasmic segment spans residues 875–891 (TLNMLIKIIGNSVGALG). A helical membrane pass occupies residues 892-912 (NLTLVLAIIVFIFAVVGMQLF). Over 913 to 938 (GKSYKDCVCKIASDCQLPRWHMNDFF) the chain is Extracellular. Cys921 and Cys927 are oxidised to a cystine. An intramembrane region (pore-forming) is located at residues 939 to 952 (HSFLIVFRVLCGEW). The Extracellular segment spans residues 953–965 (IETMWDCMEVAGQ). Cysteines 959 and 968 form a disulfide. A helical transmembrane segment spans residues 966-992 (AMCLTVFMMVMVIGNLVVLNLFLALLL). At 993–1218 (SSFSADNLAA…RTCFRIVEHN (226 aa)) the chain is on the cytoplasmic side. Positions 1129–1163 (TEDFSSESDLEESKEKLNESSSSSEGSTVDIGAPV) are disordered. The III repeat unit spans residues 1200–1514 (RGKQWWNLRR…KKYYNAMKKL (315 aa)). A helical transmembrane segment spans residues 1219–1237 (WFETFIVFMILLSSGALAF). Residues 1238 to 1250 (EDIYIDQRKTIKT) are Extracellular-facing. A helical transmembrane segment spans residues 1251 to 1276 (MLEYADKVFTYIFILEMLLKWVAYGY). The Cytoplasmic segment spans residues 1277 to 1278 (QT). Residues 1279 to 1304 (YFTNAWCWLDFLIVDVSLVSLTANAL) traverse the membrane as a helical segment. The Extracellular segment spans residues 1305-1313 (GYSELGAIK). A helical membrane pass occupies residues 1314–1332 (SLRTLRALRPLRALSRFEG). Topologically, residues 1333 to 1345 (MRVVVNALLGAIP) are cytoplasmic. Residues 1346 to 1369 (SIMNVLLVCLIFWLIFSIMGVNLF) traverse the membrane as a helical segment. Over 1370–1415 (AGKFYHCINTTTGDRFDIEDVNNHTDCLKLIERNETARWKNVKVNF) the chain is Extracellular. Cys1376 and Cys1396 are oxidised to a cystine. N-linked (GlcNAc...) asparagine glycosylation is found at Asn1378, Asn1392, and Asn1403. The pore-forming intramembrane region spans 1416 to 1433 (DNVGFGYLSLLQVATFKG). Over 1434–1457 (WMDIMYAAVDSRNVELQPKYEESL) the chain is Extracellular. Residues 1458–1483 (YMYLYFVIFIIFGSFFTLNLFIGVII) form a helical membrane-spanning segment. Residues 1484–1541 (DNFNQQKKKFGGQDIFMTEEQKKYYNAMKKLGSKKPQKPIPRPGNKFQGMVFDFVTRQ) are Cytoplasmic-facing. Ser1516 carries the post-translational modification Phosphoserine; by PKC. Residues 1523 to 1821 (IPRPGNKFQG…WEKFDPDATQ (299 aa)) form an IV repeat. A helical membrane pass occupies residues 1542–1560 (VFDISIMILICLNMVTMMV). Residues 1561–1571 (ETDDQSEYVTT) are Extracellular-facing. Residues 1561 to 1571 (ETDDQSEYVTT) are S1-S2 loop of repeat IV. A helical transmembrane segment spans residues 1572-1593 (ILSRINLVFIVLFTGECVLKLI). The Cytoplasmic portion of the chain corresponds to 1594–1601 (SLRHYYFT). A helical membrane pass occupies residues 1602–1623 (IGWNIFDFVVVILSIVGMFLAE). The tract at residues 1619–1636 (MFLAELIEKYFVSPTLFR) is S3b-S4 loop of repeat IV. The Extracellular segment spans residues 1624–1636 (LIEKYFVSPTLFR). A helical membrane pass occupies residues 1637 to 1655 (VIRLARIGRILRLIKGAKG). Topologically, residues 1656–1665 (IRTLLFALMM) are cytoplasmic. A helical membrane pass occupies residues 1666-1688 (SLPALFNIGLLLFLVMFIYAIFG). Over 1689 to 1711 (MSNFAYVKREVGIDDMFNFETFG) the chain is Extracellular. An intramembrane region (pore-forming) is located at residues 1712 to 1726 (NSMICLFQITTSAGW). At 1727–1759 (DGLLAPILNSKPPDCDPNKVNPGSSVKGDCGNP) the chain is on the extracellular side. Cysteines 1741 and 1756 form a disulfide. A helical transmembrane segment spans residues 1760 to 1788 (SVGIFFFVSYIIISFLVVVNMYIAVILEN). The Cytoplasmic segment spans residues 1789–2009 (FSVATEESAE…EGKDEKAKGK (221 aa)). Positions 1915–1944 (EEVSAVIIQRAYRRHLLKRTVKQASFTYNK) constitute an IQ domain. Positions 1986-2009 (YDRVTKPIVEKHEQEGKDEKAKGK) are disordered. The segment covering 1988-2009 (RVTKPIVEKHEQEGKDEKAKGK) has biased composition (basic and acidic residues).

The protein belongs to the sodium channel (TC 1.A.1.10) family. Nav1.1/SCN1A subfamily. In terms of assembly, the Nav1.1 voltage-gated sodium channel consists of an ion-conducting alpha subunit SCN1A which is functional on its own regulated by one or more beta-1 (SCN1B), beta-2 (SCN2B), beta-3 (SCN3B) and beta-4 (SCN4B) subunits. SCN1B and SCN3B are non-covalently associated with SCN1A. SCN2B and SCN4B are disulfide-linked to SCN1A. SCN1B regulates both the expression at the plasma membrane and the voltage dependence of Nav1.1 inactivation. SCN3B and SCN4B reduce Nav1.1 conductance. Probably interacts with TMEM233; modulates the gating properties of NaV1.1. Interacts with FGF13; regulates the steady-state inactivation of Nav.1.1. Phosphorylation at Ser-1516 by PKC in a highly conserved cytoplasmic loop slows inactivation of the sodium channel and reduces peak sodium currents.

It localises to the cell membrane. The catalysed reaction is Na(+)(in) = Na(+)(out). With respect to regulation, activated by the spider toxins Hm1a and Hm1b (H.maculata, AC P60992 and AC P0DOC5) eliciting acute pain and mechanical allodynia. Inhibited by the conotoxin GVIIJ. Inhibited by the spider beta/delta-theraphotoxin-Pre1a. In terms of biological role, pore-forming subunit of Nav1.1, a voltage-gated sodium (Nav) channel that directly mediates the depolarizing phase of action potentials in excitable membranes. Navs, also called VGSCs (voltage-gated sodium channels) or VDSCs (voltage-dependent sodium channels), operate by switching between closed and open conformations depending on the voltage difference across the membrane. In the open conformation they allow Na(+) ions to selectively pass through the pore, along their electrochemical gradient. The influx of Na(+) ions provokes membrane depolarization, initiating the propagation of electrical signals throughout cells and tissues. By regulating the excitability of neurons, ensures that they respond appropriately to synaptic inputs, maintaining the balance between excitation and inhibition in brain neural circuits. Nav1.1 plays a role in controlling the excitability and action potential propagation from somatosensory neurons, thereby contributing to the sensory perception of mechanically-induced pain. This Homo sapiens (Human) protein is Sodium channel protein type 1 subunit alpha.